The primary structure comprises 241 residues: MAKNKAEKEKVHKVFQNISTNYDKLNNIISFEQHKVWRKRVMKSMQVKKGSKALDVCCGTADWTIALSKAVGPSGEVIGLDFSENMLKVGEEKTKNMSNIQLVQGDAMDLPFDDNEFDYVTIGFGLRNIPDYVIALKEMNRVLKPGGMAVCLETSQPTIPVFKQGYQLYFKFVMPIFGKLFAKSKEEYEWLQQSAFNFPDRDELKALFQLAGFKNVEVKSFTGGVAAMHLGYKEKETAKGD.

S-adenosyl-L-methionine contacts are provided by residues Thr60, Asp81, and 106 to 107; that span reads DA.

It belongs to the class I-like SAM-binding methyltransferase superfamily. MenG/UbiE family.

The catalysed reaction is a 2-demethylmenaquinol + S-adenosyl-L-methionine = a menaquinol + S-adenosyl-L-homocysteine + H(+). It participates in quinol/quinone metabolism; menaquinone biosynthesis; menaquinol from 1,4-dihydroxy-2-naphthoate: step 2/2. Functionally, methyltransferase required for the conversion of demethylmenaquinol (DMKH2) to menaquinol (MKH2). This is Demethylmenaquinone methyltransferase from Staphylococcus carnosus (strain TM300).